A 798-amino-acid polypeptide reads, in one-letter code: MPPKKAQTRRIVSLDSLFGHTLLNITGEPVTPTKIAIFQLIRTLFHAHFGVGAVPSLKPFDKDEKTRVFTVLYGLIIMKSEISYDDFRCIVRILNDGLGRSIYYRFVTSMEKLAHGEDQIEMLFEDAFYTAKRPNHEKVLKREDSWLDELTFMNSNSFLYIWIKRVMMQYTRTSQNGTFEIAEKFQKWIISGTLEIISHPILSGINRALPTEIDCSIRARHWCAAQLRLVQLCPTKAMSYFQILDWCDTIHRRHHDVVDVHLLRAAIFVQLKNSSDAVKSLKQFFDMSMLEITENSKHALETLKLMSPSQVALRFGPILQGRVHRIFGERQIASALFAESIQQSQVNVDDMCNRIANMEVTINSIYMSGPLLQRLSGETFAAGKKEEESVENERRVQQNSVHAAVDLNVPTLRSLQKNFREDYELHAFLVSMCKFLLCIQDMMDGKFFKHNSTADYVSVGFHRLRLLLDMNNKGFVLQAFANAIMTSGLIQSGMYHQAKRVAETMIVSNCDAPNSPILETESHAVAGVNLVYSLAAVGDYEKAQKTIDILKNRFPENINWMAARHVDICSKIVNFERNFLLNKYSECSRHLAGLETSAPLEFVLRKSLLLAATGKLAEAVLLLGTYECGDVRGSMRIHMQMATIHTAYGQFETAEIQIQEAGKVAVNAHFLDANLLVVRRVGSLMLGRFMAREAYQVLHALSAKIEHFGSFIEKAIYHVSMARCLRLMHKDPRVHLKQCKAQIIGNKWPAMEKLLLTELTILHHSGGLYPDEQKEMKAKERFGKIEADFPGPCTWMFI.

A coiled-coil region spans residues 339 to 359; the sequence is ESIQQSQVNVDDMCNRIANME.

This sequence belongs to the APC5 family. The APC/C complex is probably composed of at least 12 subunits: apc-2, apc-10, apc-11, cdc-26, emb-1, emb-27, emb-30, mat-1, mat-2, mat-3, such-1 and gfi-3. In terms of tissue distribution, expressed in head neurons, vulval precursor cells and in mature sperm stored in the spermatheca.

It participates in protein modification; protein ubiquitination. In terms of biological role, probable component of the anaphase promoting complex/cyclosome (APC/C), a cell cycle-regulated E3 ubiquitin ligase that controls progression through mitosis and the G1 phase of the cell cycle. The APC/C complex acts by mediating ubiquitination and subsequent degradation of target proteins. Required for the metaphase to anaphase transition in meiosis. Plays a role in the segregation of DNA and centrioles during meiosis in male germ cells. The protein is Suppressor of spindle checkpoint defect 1 of Caenorhabditis elegans.